The chain runs to 570 residues: Proline--tRNA ligase (570 aa).

Belongs to the class-II aminoacyl-tRNA synthetase family. ProS type 1 subfamily. In terms of assembly, homodimer.

It is found in the cytoplasm. The catalysed reaction is tRNA(Pro) + L-proline + ATP = L-prolyl-tRNA(Pro) + AMP + diphosphate. Functionally, catalyzes the attachment of proline to tRNA(Pro) in a two-step reaction: proline is first activated by ATP to form Pro-AMP and then transferred to the acceptor end of tRNA(Pro). As ProRS can inadvertently accommodate and process non-cognate amino acids such as alanine and cysteine, to avoid such errors it has two additional distinct editing activities against alanine. One activity is designated as 'pretransfer' editing and involves the tRNA(Pro)-independent hydrolysis of activated Ala-AMP. The other activity is designated 'posttransfer' editing and involves deacylation of mischarged Ala-tRNA(Pro). The misacylated Cys-tRNA(Pro) is not edited by ProRS. The protein is Proline--tRNA ligase of Clostridium perfringens (strain SM101 / Type A).